Reading from the N-terminus, the 584-residue chain is Probable lysosomal cobalamin transporter (584 aa).

10 helical membrane-spanning segments follow: residues 8–28, 46–66, 93–113, 144–164, 189–209, 313–333, 350–370, 376–396, 421–441, and 509–529; these read LIWI…STFV, IFTL…VALV, TVVY…IVPF, TLVF…VPVA, ALTF…VIYS, LLGG…MLLT, ILGK…AASV, VIFI…IATI, ATVM…MIVV, and GIVD…VLLI.

This sequence belongs to the LIMR family. LMBRD1 subfamily.

The protein resides in the lysosome membrane. Probable lysosomal cobalamin transporter. Required to export cobalamin from lysosomes allowing its conversion to cofactors. In Coccidioides immitis (strain RS) (Valley fever fungus), this protein is Probable lysosomal cobalamin transporter.